The chain runs to 357 residues: MTYVSLADLERAARDVLPGEIFDFLAGGSGTEASLVANRTALERVFVIPRMLRDLTDVTTEIDIFGRRAALPMAVAPVAYQRLFHPEGELAVARAARDAGVPYTICTLSSVSLEEIAAVGGRPWFQLYWLRDEKRSLDLVRRAEDAGCEAIVFTVDVPWMGRRLRDMRNGFALPEWVTAANFDAGTAAHRRTQGVSAVADHTAREFAPATWESVEAVRAHTDLPVVLKGILAVEDARRAVDAGAGGIVVSNHGGRQLDGAVPGIEMLGEIVAAVSGGCEVLVDGGIRSGGDVLKATALGASAVLVGRPVMWALAAAGQDGVRQLLELLAEEVRDAMGLAGCESVGAARRLNTKLGVV.

Residues 1-357 (MTYVSLADLE…RRLNTKLGVV (357 aa)) form the FMN hydroxy acid dehydrogenase domain. Gln-126 is a binding site for FMN. Tyr-128 lines the a 2-oxocarboxylate pocket. Thr-154 serves as a coordination point for FMN. Arg-163 contacts a 2-oxocarboxylate. Residue Lys-228 participates in FMN binding. His-252 acts as the Proton acceptor in catalysis. Position 255 (Arg-255) interacts with a 2-oxocarboxylate. Residues 283-287 (DGGIR) and 306-307 (GR) each bind FMN.

This sequence belongs to the FMN-dependent alpha-hydroxy acid dehydrogenase family. Requires FMN as cofactor.

The catalysed reaction is (S)-4-hydroxymandelate + O2 = 4-hydroxyphenylglyoxylate + H2O2. Its pathway is antibiotic biosynthesis; vancomycin biosynthesis. Functionally, catalyzes the oxidation of p-hydroxymandelate to p-hydroxybenzoylformate in the biosynthesis of L-(4-hydroxyphenyl)glycine and L-(3,5-dihydroxyphenyl)glycine, 2 non-proteinogenic amino acids occurring in the vancomycin group of antibiotics. This Amycolatopsis orientalis (Nocardia orientalis) protein is 4-hydroxymandelate oxidase (hmo).